A 504-amino-acid chain; its full sequence is Sodium-coupled neutral amino acid symporter 2 (504 aa).

The interval 1-23 is disordered; it reads MKKTEMGRFNISPDEDSSSYSSN. The Cytoplasmic segment spans residues 1–76; it reads MKKTEMGRFN…HPGTTSFGMS (76 aa). Residues 1–96 are regulates protein turnover upon amino acid deprivation; the sequence is MKKTEMGRFN…SGILGLSYAM (96 aa). Residues serine 12, serine 21, serine 22, and serine 55 each carry the phosphoserine modification. Residues 77–96 form a helical membrane-spanning segment; that stretch reads VFNLSNAIVGSGILGLSYAM. Asparagine 82 is a binding site for Na(+). The Extracellular segment spans residues 97 to 102; it reads ANTGIA. Residues 103-123 form a helical membrane-spanning segment; the sequence is LFIILLTFVSIFSLYSVHLLL. Topologically, residues 124–158 are cytoplasmic; sequence KTANEGGSLLYEQLGHKAYGLAGKLAASGSITMQN. A helical membrane pass occupies residues 159-177; it reads IGAMSSYLFIVKYELPLVI. Over 178-188 the chain is Extracellular; the sequence is KALMNIEDTNG. Residues 189–209 form a helical membrane-spanning segment; the sequence is LWYLNGDYLVLLVSLVLILPL. Residues 210 to 217 lie on the Cytoplasmic side of the membrane; sequence SLLRNLGY. Residues 218–238 traverse the membrane as a helical segment; that stretch reads LGYTSGLSLLCMIFFLIVVIC. The Extracellular segment spans residues 239–289; sequence KKFQIPCPVEAALVANETVNGTFTQAALALAFNSTADDACRPRYFIFNSQT. Cysteines 245 and 278 form a disulfide. Asparagine 254 and asparagine 258 each carry an N-linked (GlcNAc...) asparagine glycan. Residues 290–310 form a helical membrane-spanning segment; it reads VYAVPILTFSFVCHPAVLPIY. The Cytoplasmic portion of the chain corresponds to 311–326; it reads EELKSRSRRRMMNVSK. The helical transmembrane segment at 327 to 347 threads the bilayer; it reads ISFFAMFLMYLLAALFGYLTF. Over 348-368 the chain is Extracellular; sequence YGHVESELLHTYSEIVGTDIL. A helical membrane pass occupies residues 369-389; the sequence is LLVVRLAVLVAVTLTVPVVIF. Threonine 383 lines the Na(+) pocket. The Cytoplasmic portion of the chain corresponds to 390–410; that stretch reads PIRSSVTHLLCPTKEFSWLRH. Residues 411 to 431 traverse the membrane as a helical segment; that stretch reads SIITVTILSFTNLLVIFVPTI. Topologically, residues 432–433 are extracellular; it reads RD. The chain crosses the membrane as a helical span at residues 434-454; that stretch reads IFGFIGASAAAMLIFILPSAF. The Cytoplasmic segment spans residues 455-469; that stretch reads YIKLVKKEPMRSVQK. The helical transmembrane segment at 470-492 threads the bilayer; that stretch reads IGALCFLLSGIVVMIGSMGLIVL. The Extracellular portion of the chain corresponds to 493-504; it reads DWVHDASAAGGH.

Belongs to the amino acid/polyamine transporter 2 family. Post-translationally, polyubiquitination by NEDD4L regulates the degradation and the activity of SLC38A2. Expressed in cerebral and cerebellar astrocytes and neurons.

It is found in the cell membrane. The enzyme catalyses L-alanine(in) + Na(+)(in) = L-alanine(out) + Na(+)(out). It catalyses the reaction glycine(in) + Na(+)(in) = glycine(out) + Na(+)(out). The catalysed reaction is L-serine(in) + Na(+)(in) = L-serine(out) + Na(+)(out). It carries out the reaction L-proline(in) + Na(+)(in) = L-proline(out) + Na(+)(out). The enzyme catalyses L-methionine(in) + Na(+)(in) = L-methionine(out) + Na(+)(out). It catalyses the reaction L-histidine(in) + Na(+)(in) = L-histidine(out) + Na(+)(out). The catalysed reaction is L-asparagine(in) + Na(+)(in) = L-asparagine(out) + Na(+)(out). It carries out the reaction L-glutamine(in) + Na(+)(in) = L-glutamine(out) + Na(+)(out). The enzyme catalyses L-threonine(in) + Na(+)(in) = L-threonine(out) + Na(+)(out). It catalyses the reaction L-leucine(in) + Na(+)(in) = L-leucine(out) + Na(+)(out). The catalysed reaction is L-phenylalanine(in) + Na(+)(in) = L-phenylalanine(out) + Na(+)(out). Inhibited by N-methyl-D-glucamine. Inhibited by choline. Allosteric regulation of sodium ions binding by pH. In terms of biological role, symporter that cotransports neutral amino acids and sodium ions from the extracellular to the intracellular side of the cell membrane. The transport is pH-sensitive, Li(+)-intolerant, electrogenic, driven by the Na(+) electrochemical gradient and cotransports of neutral amino acids and sodium ions with a stoichiometry of 1:1. May function in the transport of amino acids at the blood-brain barrier. May function in the transport of amino acids in the supply of maternal nutrients to the fetus through the placenta. Maintains a key metabolic glutamine/glutamate balance underpinning retrograde signaling by dendritic release of the neurotransmitter glutamate. Transports L-proline in differentiating osteoblasts for the efficient synthesis of proline-enriched proteins and provides proline essential for osteoblast differentiation and bone formation during bone development. The chain is Sodium-coupled neutral amino acid symporter 2 from Mus musculus (Mouse).